The following is a 215-amino-acid chain: Probable phosphoglycerate mutase GpmB (215 aa).

Residues 8-15 (RHGETQWN), 21-22 (QG), Arg-58, Arg-60, 82-85 (ELNM), 104-105 (RR), and 151-152 (GI) each bind substrate. His-9 acts as the Tele-phosphohistidine intermediate in catalysis. The Proton donor/acceptor role is filled by Glu-82.

The protein belongs to the phosphoglycerate mutase family. GpmB subfamily.

It catalyses the reaction (2R)-2-phosphoglycerate = (2R)-3-phosphoglycerate. The protein operates within carbohydrate degradation; glycolysis; pyruvate from D-glyceraldehyde 3-phosphate: step 3/5. This is Probable phosphoglycerate mutase GpmB from Escherichia fergusonii (strain ATCC 35469 / DSM 13698 / CCUG 18766 / IAM 14443 / JCM 21226 / LMG 7866 / NBRC 102419 / NCTC 12128 / CDC 0568-73).